Here is a 553-residue protein sequence, read N- to C-terminus: Transcription factor MYB65 (553 aa).

Positions 1–44 (MSYTTATADSDDGMHSSIHNESPAPDSISNGCRSRGKRSVLKKG) are disordered. 2 HTH myb-type domains span residues 38–90 (RSVL…ANHL) and 91–145 (RPNL…KRRQ). 2 consecutive DNA-binding regions (H-T-H motif) follow at residues 66-90 (WNAV…ANHL) and 118-141 (WAQM…NTRI).

Mostly expressed in roots (e.g. root tips), stems, pollen, shoot apices, flowers and floral shoot tips, and, to a lower extent, in leaves and siliques.

It localises to the nucleus. Functionally, transcriptional activator of alpha-amylase expression that binds to 5'-CAACTGTC-3' motif in target gene promoter. In vegetative tissues, inhibits growth by reducing cell proliferation. Promotes the expression of aleurone-related genes (e.g. CP1, CP, GASA1, BXL1 and BXL2) in seeds. Together with MYB33 and MYB101, promotes the programmed cell death (PCD) the vacuolation of protein storage vacuoles (PSVs) in the aleurone layers during seed germination. Together with MYB33, facilitates anther and tapetum development. This is Transcription factor MYB65 from Arabidopsis thaliana (Mouse-ear cress).